A 1264-amino-acid chain; its full sequence is Kinesin-like protein KIN-14B (1264 aa).

Polar residues predominate over residues 1–10 (MAEQKSTNMW). Positions 1-52 (MAEQKSTNMWNWEVTGFESKKSPSSEEGVHRTPSSMLRRYSIPKNSLPPHSS) are disordered. Over residues 18–30 (ESKKSPSSEEGVH) the composition is skewed to basic and acidic residues. Residues 53–84 (ELASKVQSLKDKVQLAKDDYVGLRQEATDLQE) adopt a coiled-coil conformation. The 315-residue stretch at 138–452 (NVKVFCRARP…LNYAARARNT (315 aa)) folds into the Kinesin motor domain. 219 to 226 (GQTHAGKT) lines the ATP pocket. 3 coiled-coil regions span residues 462-511 (IKKW…YNEV), 545-592 (QLRN…LKSD), and 617-640 (TKKL…ENEK). The disordered stretch occupies residues 588-615 (ALKSDMTRSRDPLEPQPRAAENTLDSSA). A compositionally biased stretch (basic and acidic residues) spans 589-600 (LKSDMTRSRDPL). Low complexity predominate over residues 652–668 (SSTQVSSPSSKASPTVQ). Disordered stretches follow at residues 652 to 684 (SSTQ…SVDK) and 1117 to 1136 (PEQE…SISS).

The protein belongs to the TRAFAC class myosin-kinesin ATPase superfamily. Kinesin family. KIN-14 subfamily. In terms of assembly, homodimer and heterodimer with KCA1. Interacts with CDKA-1. Interacts with At4g14310. Expressed in roots, leaves, stems and flowers.

It is found in the cell membrane. In terms of biological role, kinesin-like protein required for chloroplast movements and anchor to the plasma membrane. Mediates chloroplast movement via chloroplast actin (cp-actin) filaments. Required for the chloroplast avoidance response under high intensity blue light. Mediates redundantly with CHUP1 the nuclear avoidance response under high intensity blue light. May be involved in division plane determination. The sequence is that of Kinesin-like protein KIN-14B from Arabidopsis thaliana (Mouse-ear cress).